The chain runs to 673 residues: UvrABC system protein B (673 aa).

Positions Glu26–Arg183 constitute a Helicase ATP-binding domain. Gly39–Thr46 contacts ATP. The Beta-hairpin motif lies at Tyr92–Val115. One can recognise a Helicase C-terminal domain in the interval Gln431–Leu597. The UVR domain maps to Gln633–Leu668.

Belongs to the UvrB family. Forms a heterotetramer with UvrA during the search for lesions. Interacts with UvrC in an incision complex.

Its subcellular location is the cytoplasm. The UvrABC repair system catalyzes the recognition and processing of DNA lesions. A damage recognition complex composed of 2 UvrA and 2 UvrB subunits scans DNA for abnormalities. Upon binding of the UvrA(2)B(2) complex to a putative damaged site, the DNA wraps around one UvrB monomer. DNA wrap is dependent on ATP binding by UvrB and probably causes local melting of the DNA helix, facilitating insertion of UvrB beta-hairpin between the DNA strands. Then UvrB probes one DNA strand for the presence of a lesion. If a lesion is found the UvrA subunits dissociate and the UvrB-DNA preincision complex is formed. This complex is subsequently bound by UvrC and the second UvrB is released. If no lesion is found, the DNA wraps around the other UvrB subunit that will check the other stand for damage. The polypeptide is UvrABC system protein B (Salmonella arizonae (strain ATCC BAA-731 / CDC346-86 / RSK2980)).